A 150-amino-acid polypeptide reads, in one-letter code: UPF0178 protein AHA_0543 (150 aa).

The protein belongs to the UPF0178 family.

The chain is UPF0178 protein AHA_0543 from Aeromonas hydrophila subsp. hydrophila (strain ATCC 7966 / DSM 30187 / BCRC 13018 / CCUG 14551 / JCM 1027 / KCTC 2358 / NCIMB 9240 / NCTC 8049).